The sequence spans 544 residues: MSQSLSAEKLHFTTKLAYGAGDFGPAITANILVFYLLFFLTDVAGIPAALAGSVLMIGKIFDAINDPIIGLLSDRTRSRWGRRLPWMLGGMIPFALFYTAQWLIPHFSDDRLTNQWGLFIYYVAIAMAFNLCYTTVNLPYTALTPELTQNYNERTRLNSFRFAFSIGGSILSLILYILIAAGLPDRPQQQFGELGVMISVLSISALLWSALRLQEKGKEPILSPSLRRRLAPLLMAAGITLILLAIAKSFNLLGGSGFDYISFFLILLGLIWGGFGFTLRDSAVEEHLQKLENSPSPGVTENLPLLKQLKIAFSNRAFLFVIGIYLCSWLAVQLTASILVYFVVSWMGLNEQQSGTIALAVQGTALVMLFVWQALAQFLDKKVIYFLGSMVWMGAEAGLWLVQPGQVALLYTLAIFAGVGVSVAYLIPWSMIPDVVDLDELNTGKRREGFFYAFMVLLQKVGLALGLFLVGLTLEASGFIARIPGEPIPIQPDSALWAIRFAVAPLPAFFLLGGLILAIFYPITRAVHTDIRQQLQARQQNNHI.

14 helical membrane passes run I31–A51, G52–L72, L84–I104, W116–V136, F162–G182, F191–L211, L230–F250, G257–F277, F318–I338, T356–A376, V383–Q403, V407–I427, F450–V470, and F501–Y521.

Belongs to the sodium:galactoside symporter (TC 2.A.2) family.

The protein localises to the cell membrane. This is an uncharacterized protein from Synechocystis sp. (strain ATCC 27184 / PCC 6803 / Kazusa).